Here is a 434-residue protein sequence, read N- to C-terminus: MTTGAPPFSGSSPQTTRPQTVAEKILSQRGSAAVYAGDLAVVEVDQVMVVDSIAQSFIERMERDLGAVPKYPERVSIVVDHVAPASTVSVAQAQKEAREYAAKTGVRLFDVGRGICHQVLMEEKLAQPGWIVLGSDSHSTTYGAVAAFGSGMGATDIALAAASGKTWLRVPESVKVTLTGDLRPGVTAKDVALEMIRVLGADGATYQSVEIHAGDRFTRGERMTLANLCVEAGAKAGLVVPGGEILTDYGYDVPAWVYPDEGAAYAREVEIDLSALHPRMSAPSEVDNVHDVAELRGLKVDQVFIGTCTNGRIEDLHAAAEVLRGRRVDPTTRLLVIPASSQVMEEALQDGTLLTLQRAGAVLGTPGCGPCMGRHQGVLAPGEVCVSTSNRNFIGRMGDKDAHIYLASPAVAAATAVMGRVALPEDVAQVAASA.

[4Fe-4S] cluster-binding residues include cysteine 308, cysteine 368, and cysteine 371.

It belongs to the aconitase/IPM isomerase family. LeuC type 2 subfamily. As to quaternary structure, heterodimer of LeuC and LeuD. Requires [4Fe-4S] cluster as cofactor.

It carries out the reaction (2R,3S)-3-isopropylmalate = (2S)-2-isopropylmalate. Its pathway is amino-acid biosynthesis; L-leucine biosynthesis; L-leucine from 3-methyl-2-oxobutanoate: step 2/4. Its function is as follows. Catalyzes the isomerization between 2-isopropylmalate and 3-isopropylmalate, via the formation of 2-isopropylmaleate. This Deinococcus radiodurans (strain ATCC 13939 / DSM 20539 / JCM 16871 / CCUG 27074 / LMG 4051 / NBRC 15346 / NCIMB 9279 / VKM B-1422 / R1) protein is 3-isopropylmalate dehydratase large subunit 1.